The primary structure comprises 453 residues: Bifunctional protein GlmU (453 aa).

A pyrophosphorylase region spans residues Met1–Lys225. Residues Leu6–Gly9, Lys20, Gln71, Gly76–Thr77, Tyr98–Asp100, Gly135, Glu150, Asn165, and Asn223 contribute to the UDP-N-acetyl-alpha-D-glucosamine site. Asp100 serves as a coordination point for Mg(2+). A Mg(2+)-binding site is contributed by Asn223. The linker stretch occupies residues Gln226–Ala246. Residues Gly247–Ser453 form an N-acetyltransferase region. UDP-N-acetyl-alpha-D-glucosamine contacts are provided by Arg329 and Lys347. His359 serves as the catalytic Proton acceptor. Tyr362 and Asn373 together coordinate UDP-N-acetyl-alpha-D-glucosamine. Acetyl-CoA contacts are provided by residues Ala376, Asn382–Tyr383, Ser401, and Ala419.

This sequence in the N-terminal section; belongs to the N-acetylglucosamine-1-phosphate uridyltransferase family. The protein in the C-terminal section; belongs to the transferase hexapeptide repeat family. As to quaternary structure, homotrimer. Requires Mg(2+) as cofactor.

It localises to the cytoplasm. It carries out the reaction alpha-D-glucosamine 1-phosphate + acetyl-CoA = N-acetyl-alpha-D-glucosamine 1-phosphate + CoA + H(+). It catalyses the reaction N-acetyl-alpha-D-glucosamine 1-phosphate + UTP + H(+) = UDP-N-acetyl-alpha-D-glucosamine + diphosphate. It functions in the pathway nucleotide-sugar biosynthesis; UDP-N-acetyl-alpha-D-glucosamine biosynthesis; N-acetyl-alpha-D-glucosamine 1-phosphate from alpha-D-glucosamine 6-phosphate (route II): step 2/2. It participates in nucleotide-sugar biosynthesis; UDP-N-acetyl-alpha-D-glucosamine biosynthesis; UDP-N-acetyl-alpha-D-glucosamine from N-acetyl-alpha-D-glucosamine 1-phosphate: step 1/1. The protein operates within bacterial outer membrane biogenesis; LPS lipid A biosynthesis. Functionally, catalyzes the last two sequential reactions in the de novo biosynthetic pathway for UDP-N-acetylglucosamine (UDP-GlcNAc). The C-terminal domain catalyzes the transfer of acetyl group from acetyl coenzyme A to glucosamine-1-phosphate (GlcN-1-P) to produce N-acetylglucosamine-1-phosphate (GlcNAc-1-P), which is converted into UDP-GlcNAc by the transfer of uridine 5-monophosphate (from uridine 5-triphosphate), a reaction catalyzed by the N-terminal domain. The sequence is that of Bifunctional protein GlmU from Paraburkholderia phytofirmans (strain DSM 17436 / LMG 22146 / PsJN) (Burkholderia phytofirmans).